The chain runs to 33 residues: Cytochrome b6-f complex subunit 8 (33 aa).

A helical transmembrane segment spans residues 2–22 (LFTVAWASLAAMFSFSIAMVV).

It belongs to the PetN family. In terms of assembly, the 4 large subunits of the cytochrome b6-f complex are cytochrome b6, subunit IV (17 kDa polypeptide, PetD), cytochrome f and the Rieske protein, while the 4 small subunits are PetG, PetL, PetM and PetN. The complex functions as a dimer.

The protein resides in the cellular thylakoid membrane. Component of the cytochrome b6-f complex, which mediates electron transfer between photosystem II (PSII) and photosystem I (PSI), cyclic electron flow around PSI, and state transitions. This is Cytochrome b6-f complex subunit 8 from Parasynechococcus marenigrum (strain WH8102).